A 145-amino-acid polypeptide reads, in one-letter code: D-aminoacyl-tRNA deacylase (145 aa).

A Gly-cisPro motif, important for rejection of L-amino acids motif is present at residues 137–138; the sequence is GP.

The protein belongs to the DTD family. As to quaternary structure, homodimer.

Its subcellular location is the cytoplasm. It catalyses the reaction glycyl-tRNA(Ala) + H2O = tRNA(Ala) + glycine + H(+). The catalysed reaction is a D-aminoacyl-tRNA + H2O = a tRNA + a D-alpha-amino acid + H(+). Functionally, an aminoacyl-tRNA editing enzyme that deacylates mischarged D-aminoacyl-tRNAs. Also deacylates mischarged glycyl-tRNA(Ala), protecting cells against glycine mischarging by AlaRS. Acts via tRNA-based rather than protein-based catalysis; rejects L-amino acids rather than detecting D-amino acids in the active site. By recycling D-aminoacyl-tRNA to D-amino acids and free tRNA molecules, this enzyme counteracts the toxicity associated with the formation of D-aminoacyl-tRNA entities in vivo and helps enforce protein L-homochirality. The chain is D-aminoacyl-tRNA deacylase from Serratia proteamaculans (strain 568).